A 497-amino-acid polypeptide reads, in one-letter code: Malonate-semialdehyde dehydrogenase (497 aa).

NAD(+)-binding residues include phenylalanine 148, lysine 172, glutamate 175, arginine 176, and serine 225. Catalysis depends on cysteine 280, which acts as the Nucleophile. Residue glutamate 382 coordinates NAD(+).

This sequence belongs to the aldehyde dehydrogenase family.

The catalysed reaction is 3-oxopropanoate + NAD(+) + CoA + H2O = hydrogencarbonate + acetyl-CoA + NADH + H(+). Its function is as follows. Involved in the degradation of beta-alanine. Likely catalyzes the NAD(+)- and CoA-dependent oxidative decarboxylation of malonate semialdehyde (3-oxopropanoate) to acetyl-CoA. This chain is Malonate-semialdehyde dehydrogenase, found in Pseudomonas aeruginosa (strain ATCC 15692 / DSM 22644 / CIP 104116 / JCM 14847 / LMG 12228 / 1C / PRS 101 / PAO1).